The primary structure comprises 449 residues: Phosphoglucosamine mutase (449 aa).

Catalysis depends on S100, which acts as the Phosphoserine intermediate. S100, D241, D243, and D245 together coordinate Mg(2+). S100 is subject to Phosphoserine.

This sequence belongs to the phosphohexose mutase family. The cofactor is Mg(2+). Activated by phosphorylation.

The enzyme catalyses alpha-D-glucosamine 1-phosphate = D-glucosamine 6-phosphate. Functionally, catalyzes the conversion of glucosamine-6-phosphate to glucosamine-1-phosphate. The chain is Phosphoglucosamine mutase from Clostridium botulinum (strain 657 / Type Ba4).